We begin with the raw amino-acid sequence, 149 residues long: Nucleoside diphosphate kinase (149 aa).

K9, F57, R85, T91, R102, and N112 together coordinate ATP. The Pros-phosphohistidine intermediate role is filled by H115.

This sequence belongs to the NDK family. In terms of assembly, homotetramer. The cofactor is Mg(2+).

The protein localises to the cytoplasm. The enzyme catalyses a 2'-deoxyribonucleoside 5'-diphosphate + ATP = a 2'-deoxyribonucleoside 5'-triphosphate + ADP. It carries out the reaction a ribonucleoside 5'-diphosphate + ATP = a ribonucleoside 5'-triphosphate + ADP. Functionally, major role in the synthesis of nucleoside triphosphates other than ATP. The ATP gamma phosphate is transferred to the NDP beta phosphate via a ping-pong mechanism, using a phosphorylated active-site intermediate. The sequence is that of Nucleoside diphosphate kinase from Thermomicrobium roseum (strain ATCC 27502 / DSM 5159 / P-2).